The sequence spans 199 residues: Putative peroxiredoxin ycf42 (199 aa).

Positions 8–165 (LRVGQLAPDF…TLRVLQAIQY (158 aa)) constitute a Thioredoxin domain. Cys-53 functions as the Cysteine sulfenic acid (-SOH) intermediate in the catalytic mechanism.

This sequence belongs to the peroxiredoxin family. AhpC/Prx1 subfamily. As to quaternary structure, homodimer; disulfide-linked, upon oxidation. Post-translationally, the Cys-53-SH group is the primary site of oxidation by H(2)O(2), and the oxidized Cys-53 (probably Cys-SOH) rapidly reacts with Cys-174-SH of the other subunit to form an intermolecular disulfide. This disulfide is subsequently reduced by thioredoxin.

It is found in the plastid. It localises to the chloroplast. It carries out the reaction a hydroperoxide + [thioredoxin]-dithiol = an alcohol + [thioredoxin]-disulfide + H2O. Thiol-specific peroxidase that catalyzes the reduction of hydrogen peroxide and organic hydroperoxides to water and alcohols, respectively. Plays a role in cell protection against oxidative stress by detoxifying peroxides. The protein is Putative peroxiredoxin ycf42 (ycf42) of Pyropia yezoensis (Susabi-nori).